Consider the following 331-residue polypeptide: Geranylgeranyl transferase type-2 subunit beta (331 aa).

Position 2 is an N-acetylglycine (G2). A Phosphothreonine modification is found at T3. 6 PFTB repeats span residues 20 to 61 (LEKH…DLMG), 68 to 109 (REEI…TLYD), 116 to 157 (INKV…ALLG), 164 to 205 (VEKA…AITS), 212 to 253 (SDLL…KIIG), and 260 to 302 (REKL…SLLG). 190 to 192 (HAG) provides a ligand contact to geranylgeranyl diphosphate. Zn(2+)-binding residues include D238 and C240. 241–244 (YSWW) lines the geranylgeranyl diphosphate pocket. Residue H290 coordinates Zn(2+).

The protein belongs to the protein prenyltransferase subunit beta family. Heterotrimer composed of RABGGTA, RABGGTB and CHM; within this trimer, RABGGTA and RABGGTB form the catalytic component B, while CHM (component A) mediates peptide substrate binding. The Rab GGTase dimer (RGGT) interacts with CHM (component A) prior to Rab protein binding; the association is stabilized by geranylgeranyl pyrophosphate (GGpp). The CHM:RGGT:Rab complex is destabilized by GGpp. Interaction of RABGGTB with prenylated PTP4A2 precludes its association with RABGGTA and inhibits enzyme activity. Interacts with CHODL. Interacts with non-phosphorylated form of RAB8A; phosphorylation of RAB8A at 'Thr-72' disrupts this interaction. Requires Zn(2+) as cofactor.

The enzyme catalyses geranylgeranyl diphosphate + L-cysteinyl-[protein] = S-geranylgeranyl-L-cysteinyl-[protein] + diphosphate. The enzymatic reaction requires the aid of a Rab escort protein (also called component A). Functionally, catalyzes the transfer of a geranylgeranyl moiety from geranylgeranyl diphosphate to both cysteines of Rab proteins with the C-terminal sequence -XXCC, -XCXC and -CCXX, such as RAB1A, RAB3A, RAB5A and RAB7A. The chain is Geranylgeranyl transferase type-2 subunit beta (RABGGTB) from Bos taurus (Bovine).